Consider the following 234-residue polypeptide: Ribosomal RNA small subunit methyltransferase G (234 aa).

Residues Gly74, Phe79, 125–126 (AE), and Arg144 each bind S-adenosyl-L-methionine.

This sequence belongs to the methyltransferase superfamily. RNA methyltransferase RsmG family.

It localises to the cytoplasm. In terms of biological role, specifically methylates the N7 position of a guanine in 16S rRNA. This is Ribosomal RNA small subunit methyltransferase G from Roseiflexus castenholzii (strain DSM 13941 / HLO8).